The following is a 500-amino-acid chain: Probable betaine aldehyde dehydrogenase (500 aa).

249 to 254 lines the NAD(+) pocket; sequence GSLATG. Glutamate 271 acts as the Proton acceptor in catalysis. Cysteine 305 functions as the Nucleophile in the catalytic mechanism.

The protein belongs to the aldehyde dehydrogenase family.

It catalyses the reaction betaine aldehyde + NAD(+) + H2O = glycine betaine + NADH + 2 H(+). It functions in the pathway amine and polyamine biosynthesis; betaine biosynthesis via choline pathway; betaine from betaine aldehyde: step 1/1. This is Probable betaine aldehyde dehydrogenase (meu8) from Schizosaccharomyces pombe (strain 972 / ATCC 24843) (Fission yeast).